We begin with the raw amino-acid sequence, 315 residues long: Taste receptor type 2 member 3 (315 aa).

Residues 1-5 (MGLTE) are Extracellular-facing. A helical membrane pass occupies residues 6–26 (GVFLILSGTQFTLGILVNCFI). Over 27-41 (ELVNGSSWFKTKRMS) the chain is Cytoplasmic. The helical transmembrane segment at 42–62 (LSDFIITTLALLRIILLCIIL) threads the bilayer. The Extracellular segment spans residues 63–93 (TDSFLIEFSPNTHDSGIIMQIIDVSWTFTNH). A helical transmembrane segment spans residues 94-114 (LSIWLATCLGVLYCLKIASFS). The Cytoplasmic segment spans residues 115–127 (HPTFLWLKWRVSR). A helical transmembrane segment spans residues 128–148 (VMVWMLLGALLLSCGSTASLI). Over 149–185 (NEFKLYSVFRGIEATRNVTEHFRKKRSEYYLIHVLGT) the chain is Extracellular. N165 is a glycosylation site (N-linked (GlcNAc...) asparagine). The chain crosses the membrane as a helical span at residues 186 to 206 (LWYLPPLIVSLASYSLLIFSL). The Cytoplasmic portion of the chain corresponds to 207-233 (GRHTRQMLQNGTSSRDPTTEAHKRAIR). A helical membrane pass occupies residues 234-254 (IILSFFFLFLLYFLAFLIASF). The Extracellular segment spans residues 255-265 (GNFLPKTKMAK). Residues 266 to 286 (MIGEVMTMFYPAGHSFILILG) traverse the membrane as a helical segment. At 287-315 (NSKLKQTFVVMLRCESGHLKPGSKGPIFS) the chain is on the cytoplasmic side.

This sequence belongs to the G-protein coupled receptor T2R family.

It is found in the membrane. Gustducin-coupled receptor implicated in the perception of bitter compounds in the oral cavity and the gastrointestinal tract. Signals through PLCB2 and the calcium-regulated cation channel TRPM5. The protein is Taste receptor type 2 member 3 (TAS2R3) of Gorilla gorilla gorilla (Western lowland gorilla).